Reading from the N-terminus, the 378-residue chain is Mannitol-1-phosphate 5-dehydrogenase (378 aa).

An NAD(+)-binding site is contributed by 4-15 (SVHFGAGNIGRG).

Belongs to the mannitol dehydrogenase family.

The catalysed reaction is D-mannitol 1-phosphate + NAD(+) = beta-D-fructose 6-phosphate + NADH + H(+). In Streptococcus pneumoniae (strain JJA), this protein is Mannitol-1-phosphate 5-dehydrogenase.